A 166-amino-acid chain; its full sequence is uncharacterized protein (166 aa).

An ATP-binding site is contributed by 117 to 124 (AAKSGGKT).

This is an uncharacterized protein from Mycoplasma pneumoniae (strain ATCC 29342 / M129 / Subtype 1) (Mycoplasmoides pneumoniae).